A 1108-amino-acid chain; its full sequence is Isoleucine--tRNA ligase (1108 aa).

Residues 53–63 carry the 'HIGH' region motif; that stretch reads PFANGLPHYGH. A 'KMSKS' region motif is present at residues 654–658; the sequence is KLSKR. Lysine 657 is an ATP binding site.

This sequence belongs to the class-I aminoacyl-tRNA synthetase family. IleS type 2 subfamily. As to quaternary structure, monomer. Requires Zn(2+) as cofactor.

The protein resides in the cytoplasm. It catalyses the reaction tRNA(Ile) + L-isoleucine + ATP = L-isoleucyl-tRNA(Ile) + AMP + diphosphate. Catalyzes the attachment of isoleucine to tRNA(Ile). As IleRS can inadvertently accommodate and process structurally similar amino acids such as valine, to avoid such errors it has two additional distinct tRNA(Ile)-dependent editing activities. One activity is designated as 'pretransfer' editing and involves the hydrolysis of activated Val-AMP. The other activity is designated 'posttransfer' editing and involves deacylation of mischarged Val-tRNA(Ile). This chain is Isoleucine--tRNA ligase, found in Rickettsia bellii (strain RML369-C).